Reading from the N-terminus, the 338-residue chain is Phenylalanine--tRNA ligase alpha subunit (338 aa).

Mg(2+) is bound at residue glutamate 252.

Belongs to the class-II aminoacyl-tRNA synthetase family. Phe-tRNA synthetase alpha subunit type 1 subfamily. Tetramer of two alpha and two beta subunits. Mg(2+) is required as a cofactor.

It is found in the cytoplasm. It carries out the reaction tRNA(Phe) + L-phenylalanine + ATP = L-phenylalanyl-tRNA(Phe) + AMP + diphosphate + H(+). This chain is Phenylalanine--tRNA ligase alpha subunit, found in Pseudomonas entomophila (strain L48).